We begin with the raw amino-acid sequence, 274 residues long: Large ribosomal subunit protein uL2cz/uL2cy (274 aa).

2 disordered regions span residues 1–23 (MAIHLYKTSTPSTRNGTVGSQVK) and 223–274 (MNPV…RRSK). Residues 7–23 (KTSTPSTRNGTVGSQVK) show a composition bias toward polar residues.

This sequence belongs to the universal ribosomal protein uL2 family. Part of the 50S ribosomal subunit.

Its subcellular location is the plastid. The protein resides in the chloroplast. This Nandina domestica (Heavenly bamboo) protein is Large ribosomal subunit protein uL2cz/uL2cy (rpl2-A).